Consider the following 582-residue polypeptide: TRAF-type zinc finger domain-containing protein 1 (582 aa).

A2 bears the N-acetylalanine mark. The TRAF-type zinc-finger motif lies at 27-103 (IHEIHCQRNI…DLELSILKLK (77 aa)). Position 191 is a phosphoserine (S191). Positions 217 to 236 (EQERQERNRGQQPPKEGGEE) are disordered. 8 positions are modified to phosphoserine: S278, S320, S326, S327, S409, S415, S430, and S470. A disordered region spans residues 401–582 (TEGIPRLDSQ…AGDAEEEEEE (182 aa)). Composition is skewed to polar residues over residues 454 to 471 (PINNMTATYNQLSRSTSG) and 486 to 495 (LSNSDSQDIQ).

As to quaternary structure, interacts with MAVS, TICAM1, TRAF1, TRAF2, TRAF3. Interacts with TRAF6.

In terms of biological role, negative feedback regulator that controls excessive innate immune responses. Regulates both Toll-like receptor 4 (TLR4) and DDX58/RIG1-like helicases (RLH) pathways. May inhibit the LTR pathway by direct interaction with TRAF6 and attenuation of NF-kappa-B activation. May negatively regulate the RLH pathway downstream from MAVS and upstream of NF-kappa-B and IRF3. The sequence is that of TRAF-type zinc finger domain-containing protein 1 (TRAFD1) from Homo sapiens (Human).